The following is a 309-amino-acid chain: Carbamate kinase (309 aa).

It belongs to the carbamate kinase family.

Its subcellular location is the cytoplasm. It carries out the reaction hydrogencarbonate + NH4(+) + ATP = carbamoyl phosphate + ADP + H2O + H(+). The protein operates within metabolic intermediate metabolism; carbamoyl phosphate degradation; CO(2) and NH(3) from carbamoyl phosphate: step 1/1. The chain is Carbamate kinase (arcC) from Staphylococcus haemolyticus (strain JCSC1435).